We begin with the raw amino-acid sequence, 133 residues long: Protein OPG104 (133 aa).

The Virion surface portion of the chain corresponds to 1-111 (MTDEQIYAFC…RYLNQEIRYP (111 aa)). The helical; Signal-anchor transmembrane segment at 112-132 (IIDIKWLPIGLLALAILILAF) threads the bilayer.

It belongs to the orthopoxvirus OPG104 family. As to quaternary structure, part of a stable entry-fusion complex (EFC) which is at least composed of proteins OPG143, OPG147, OPG155, OPG086, OPG094, OPG107, OPG104, and OPG099. Formation of the viral membrane is necessary for the assembly of the complex.

It localises to the virion membrane. In terms of biological role, envelope protein part of the entry-fusion complex responsible for the virus membrane fusion with host cell membrane during virus entry. Also plays a role in cell-cell fusion (syncytium formation). The chain is Protein OPG104 (OPG104) from Homo sapiens (Human).